Here is a 570-residue protein sequence, read N- to C-terminus: Sulfite reductase [NADPH] hemoprotein beta-component (570 aa).

The [4Fe-4S] cluster site is built by Cys434, Cys440, Cys479, and Cys483. Position 483 (Cys483) interacts with siroheme.

Belongs to the nitrite and sulfite reductase 4Fe-4S domain family. As to quaternary structure, alpha(8)-beta(8). The alpha component is a flavoprotein, the beta component is a hemoprotein. The cofactor is siroheme. It depends on [4Fe-4S] cluster as a cofactor.

It catalyses the reaction hydrogen sulfide + 3 NADP(+) + 3 H2O = sulfite + 3 NADPH + 4 H(+). It functions in the pathway sulfur metabolism; hydrogen sulfide biosynthesis; hydrogen sulfide from sulfite (NADPH route): step 1/1. Component of the sulfite reductase complex that catalyzes the 6-electron reduction of sulfite to sulfide. This is one of several activities required for the biosynthesis of L-cysteine from sulfate. The protein is Sulfite reductase [NADPH] hemoprotein beta-component of Shigella boydii serotype 4 (strain Sb227).